The following is a 466-amino-acid chain: UDP-N-acetylmuramoylalanine--D-glutamate ligase (466 aa).

128 to 134 (GTNGKST) is an ATP binding site.

It belongs to the MurCDEF family.

The protein resides in the cytoplasm. The catalysed reaction is UDP-N-acetyl-alpha-D-muramoyl-L-alanine + D-glutamate + ATP = UDP-N-acetyl-alpha-D-muramoyl-L-alanyl-D-glutamate + ADP + phosphate + H(+). It functions in the pathway cell wall biogenesis; peptidoglycan biosynthesis. Its function is as follows. Cell wall formation. Catalyzes the addition of glutamate to the nucleotide precursor UDP-N-acetylmuramoyl-L-alanine (UMA). This Bartonella henselae (strain ATCC 49882 / DSM 28221 / CCUG 30454 / Houston 1) (Rochalimaea henselae) protein is UDP-N-acetylmuramoylalanine--D-glutamate ligase.